The chain runs to 229 residues: NAD(P)H-quinone oxidoreductase subunit K, chloroplastic (229 aa).

4 residues coordinate [4Fe-4S] cluster: Cys-43, Cys-44, Cys-108, and Cys-139.

The protein belongs to the complex I 20 kDa subunit family. NDH is composed of at least 16 different subunits, 5 of which are encoded in the nucleus. The cofactor is [4Fe-4S] cluster.

The protein resides in the plastid. Its subcellular location is the chloroplast thylakoid membrane. The enzyme catalyses a plastoquinone + NADH + (n+1) H(+)(in) = a plastoquinol + NAD(+) + n H(+)(out). It catalyses the reaction a plastoquinone + NADPH + (n+1) H(+)(in) = a plastoquinol + NADP(+) + n H(+)(out). Functionally, NDH shuttles electrons from NAD(P)H:plastoquinone, via FMN and iron-sulfur (Fe-S) centers, to quinones in the photosynthetic chain and possibly in a chloroplast respiratory chain. The immediate electron acceptor for the enzyme in this species is believed to be plastoquinone. Couples the redox reaction to proton translocation, and thus conserves the redox energy in a proton gradient. The protein is NAD(P)H-quinone oxidoreductase subunit K, chloroplastic of Aethionema grandiflorum (Persian stone-cress).